A 117-amino-acid chain; its full sequence is Ig heavy chain V region 1-62-3 (117 aa).

The N-terminal stretch at methionine 1 to phenylalanine 19 is a signal peptide. Residues glutamine 20–threonine 49 form a framework-1 region. The segment at serine 50 to histidine 54 is complementarity-determining-1. The framework-2 stretch occupies residues tryptophan 55 to glycine 68. The complementarity-determining-2 stretch occupies residues arginine 69–serine 85. The segment at lysine 86–arginine 117 is framework-3.

The sequence is that of Ig heavy chain V region 1-62-3 (Ighv1-62-3) from Mus musculus (Mouse).